A 427-amino-acid polypeptide reads, in one-letter code: Lactadherin (427 aa).

An N-terminal signal peptide occupies residues 1–22 (MQFSRVLAALCGVLLCASGLFA). 2 consecutive EGF-like domains span residues 24–61 (SGDF…LVCN) and 64–108 (EKGP…IHCE). Cystine bridges form between Cys28–Cys39, Cys33–Cys49, and Cys51–Cys60. Residue Asn61 is glycosylated (N-linked (GlcNAc...) asparagine). 6 disulfides stabilise this stretch: Cys68–Cys79, Cys73–Cys96, Cys98–Cys107, Cys111–Cys267, Cys254–Cys258, and Cys272–Cys427. Positions 87-89 (RGD) match the Cell attachment site motif. 2 F5/8 type C domains span residues 111–267 (CSTK…LLGC) and 272–427 (CSEP…LLGC). N-linked (GlcNAc...) asparagine glycosylation is present at Asn230. Asn280 and Asn390 each carry an N-linked (GlcNAc...) asparagine glycan.

In terms of tissue distribution, spleen, lung, heart, brain and muscle.

Its subcellular location is the membrane. It is found in the secreted. The protein localises to the cytoplasmic vesicle. The protein resides in the secretory vesicle. It localises to the acrosome membrane. Contributes to phagocytic removal of apoptotic cells in many tissues. Plays an important role in the maintenance of intestinal epithelial homeostasis and the promotion of mucosal healing. Promotes VEGF-dependent neovascularization. Specific ligand for the alpha-v/beta-3 and alpha-v/beta-5 receptors. Also binds to phosphatidylserine-enriched cell surfaces in a receptor-independent manner. Zona pellucida-binding protein which may play a role in gamete interaction. Appears to participate in the O-acetylation of GD3 ganglioside sialic acid. In Rattus norvegicus (Rat), this protein is Lactadherin (Mfge8).